The primary structure comprises 259 residues: Adenosylcobinamide-GDP ribazoletransferase (259 aa).

5 consecutive transmembrane segments (helical) span residues 43–63, 64–84, 116–136, 141–161, and 185–205; these read LAGA…LGLG, ASSM…TGAL, FGVL…ASLV, PINV…LMVW, and TLYT…APVT.

It belongs to the CobS family. Mg(2+) is required as a cofactor.

It localises to the cell inner membrane. It carries out the reaction alpha-ribazole + adenosylcob(III)inamide-GDP = adenosylcob(III)alamin + GMP + H(+). The catalysed reaction is alpha-ribazole 5'-phosphate + adenosylcob(III)inamide-GDP = adenosylcob(III)alamin 5'-phosphate + GMP + H(+). It participates in cofactor biosynthesis; adenosylcobalamin biosynthesis; adenosylcobalamin from cob(II)yrinate a,c-diamide: step 7/7. Its function is as follows. Joins adenosylcobinamide-GDP and alpha-ribazole to generate adenosylcobalamin (Ado-cobalamin). Also synthesizes adenosylcobalamin 5'-phosphate from adenosylcobinamide-GDP and alpha-ribazole 5'-phosphate. This Allorhizobium ampelinum (strain ATCC BAA-846 / DSM 112012 / S4) (Agrobacterium vitis (strain S4)) protein is Adenosylcobinamide-GDP ribazoletransferase.